The following is a 555-amino-acid chain: GPI-anchor transamidase component PIGS (555 aa).

The Cytoplasmic portion of the chain corresponds to 2 to 18 (AAAGAAATDLEVVRGKR). Residues R15 and R18 each contribute to the a cardiolipin site. A helical membrane pass occupies residues 19–39 (SALFFAAVAILLGLPLWWKTT). Residues 40–517 (ETYRAPLPYS…LHLLYFPDDQ (478 aa)) are Lumenal-facing. N-linked (GlcNAc...) asparagine glycosylation is found at N267 and N370. A helical membrane pass occupies residues 518 to 532 (KFAIYIPLFLPMAVP). Residues 533–555 (ILLSLVKIFQETRKSWKKPEKID) are Cytoplasmic-facing.

This sequence belongs to the PIGS family. In terms of assembly, heteropentamer. Part of the GPI-anchor transamidase complex, consisting of PIGK, PIGT, PIGS, PIGU and GAA1.

It is found in the endoplasmic reticulum membrane. It participates in glycolipid biosynthesis; glycosylphosphatidylinositol-anchor biosynthesis. Component of the glycosylphosphatidylinositol-anchor (GPI-anchor) transamidase (GPI-T) complex that catalyzes the formation of the linkage between a proprotein and a GPI-anchor and participates in GPI anchored protein biosynthesis. The protein is GPI-anchor transamidase component PIGS of Mus musculus (Mouse).